Here is a 137-residue protein sequence, read N- to C-terminus: Venom allergen 4 (137 aa).

The signal sequence occupies residues 1–19; it reads MKTFVLVSCLLVFTQIIYA.

This sequence belongs to the ant venom allergen 2/4 family. As to quaternary structure, monomer. Expressed by the venom gland.

It is found in the secreted. The protein is Venom allergen 4 of Solenopsis geminata (Tropical fire ant).